The sequence spans 121 residues: Large ribosomal subunit protein bL12 (121 aa).

Belongs to the bacterial ribosomal protein bL12 family. In terms of assembly, homodimer. Part of the ribosomal stalk of the 50S ribosomal subunit. Forms a multimeric L10(L12)X complex, where L10 forms an elongated spine to which 2 to 4 L12 dimers bind in a sequential fashion. Binds GTP-bound translation factors.

Its function is as follows. Forms part of the ribosomal stalk which helps the ribosome interact with GTP-bound translation factors. Is thus essential for accurate translation. This chain is Large ribosomal subunit protein bL12, found in Ureaplasma parvum serovar 3 (strain ATCC 27815 / 27 / NCTC 11736).